Here is a 506-residue protein sequence, read N- to C-terminus: Histidine ammonia-lyase (506 aa).

A cross-link (5-imidazolinone (Ala-Gly)) is located at residues 143 to 145 (ASG). At serine 144 the chain carries 2,3-didehydroalanine (Ser).

Belongs to the PAL/histidase family. Post-translationally, contains an active site 4-methylidene-imidazol-5-one (MIO), which is formed autocatalytically by cyclization and dehydration of residues Ala-Ser-Gly.

The protein localises to the cytoplasm. It carries out the reaction L-histidine = trans-urocanate + NH4(+). The protein operates within amino-acid degradation; L-histidine degradation into L-glutamate; N-formimidoyl-L-glutamate from L-histidine: step 1/3. This is Histidine ammonia-lyase from Salmonella arizonae (strain ATCC BAA-731 / CDC346-86 / RSK2980).